A 496-amino-acid polypeptide reads, in one-letter code: 4-O-methyl-glucuronoyl methylesterase 1 (496 aa).

The N-terminal stretch at 1-19 (MKSTVASALLVLAGTAVQA) is a signal peptide. Residues 20–55 (QSGPWQQCGGIGWQGPFTCVSGHTCQVLNDWYHQCV) form the CBM1 domain. The disordered stretch occupies residues 57 to 151 (GGGPSPPPTS…RLPDPFTFHN (95 aa)). Residues 59–125 (GPSPPPTSPP…SPPPTSPPPS (67 aa)) show a composition bias toward pro residues. 3 disulfide bridges follow: Cys129-Cys163, Cys307-Cys443, and Cys339-Cys415. The GXSYXG catalytic site motif signature appears at 306–311 (GCSRNG). Catalysis depends on Ser308, which acts as the Nucleophile. Residues Lys312, Gln354, Glu362, and Trp406 each coordinate substrate. His442 serves as the catalytic Proton donor/acceptor.

It belongs to the carbohydrate esterase 15 (CE15) family.

It is found in the secreted. The enzyme catalyses a 4-O-methyl-alpha-D-glucuronosyl ester derivative + H2O = 4-O-methyl-alpha-D-glucuronate derivative + an alcohol + H(+). Functionally, glucuronoyl esterase which may play a significant role in biomass degradation, as it is considered to disconnect hemicellulose from lignin through the hydrolysis of the ester bond between 4-O-methyl-D-glucuronic acid residues of glucuronoxylans and aromatic alcohols of lignin. Cleaves native lignin-carbohydrate (LC) ester bonds from LC complex preparations of spruce (softwood) and birch (hardwood), containing mainly hemicelluloses with partially acetylated glucomannans in spruce and partially acetylated xylan in birch. Can hydrolyze benzyl glucuronic acid (BnGlcA), allyl glucuronic acid (allylGlcA) and to a lower degree methyl glucuronic acid (MeGlcA) in vitro. In Sodiomyces alcalophilus (Acremonium alcalophilum), this protein is 4-O-methyl-glucuronoyl methylesterase 1.